Here is a 395-residue protein sequence, read N- to C-terminus: ATP phosphoribosyltransferase regulatory subunit (395 aa).

This sequence belongs to the class-II aminoacyl-tRNA synthetase family. HisZ subfamily. In terms of assembly, heteromultimer composed of HisG and HisZ subunits.

The protein resides in the cytoplasm. It participates in amino-acid biosynthesis; L-histidine biosynthesis; L-histidine from 5-phospho-alpha-D-ribose 1-diphosphate: step 1/9. In terms of biological role, required for the first step of histidine biosynthesis. May allow the feedback regulation of ATP phosphoribosyltransferase activity by histidine. This chain is ATP phosphoribosyltransferase regulatory subunit, found in Stutzerimonas stutzeri (Pseudomonas stutzeri).